The chain runs to 82 residues: Large ribosomal subunit protein uL24c (82 aa).

This sequence belongs to the universal ribosomal protein uL24 family. Part of the 50S ribosomal subunit.

The protein localises to the plastid. It localises to the chloroplast. Its function is as follows. One of two assembly initiator proteins, it binds directly to the 5'-end of the 23S rRNA, where it nucleates assembly of the 50S subunit. The polypeptide is Large ribosomal subunit protein uL24c (rpl24) (Phaeodactylum tricornutum (strain CCAP 1055/1)).